A 93-amino-acid polypeptide reads, in one-letter code: Stromal cell-derived factor 1 (93 aa).

The first 21 residues, 1-21 (MDAKVVAVLALVLAALCISDG), serve as a signal peptide directing secretion. The short motif at 22–23 (KP) is the Receptor activation motif element. Positions 29–33 (RCPCR) are receptor and heparin binding. Intrachain disulfides connect C30–C55 and C32–C71. 3 receptor binding regions span residues 39-41 (IAR), 48-50 (KIL), and 60-70 (VARLKNNNRQV). Heparin is bound by residues 41–51 (RANVKHLKILN), R62, Q69, and K85.

The protein belongs to the intercrine alpha (chemokine CxC) family. Monomer or homodimer; in equilibrium. Dimer formation is induced by non acidic pH and the presence of multivalent anions, and by binding to CXCR4 or heparin. Monomeric form is required for full chemotactic activity and resistance to ischemia/reperfusion injury, whereas the dimeric form acts as a partial agonist of CXCR4, stimulating Ca2+ mobilization but with no chemotactic activity and instead acts as a selective antagonist that blocks chemotaxis induced by the monomeric form. Interacts with the N-terminus of ACKR3. Interacts with integrin subunit ITGB3 (via the allosteric site (site 2)). Interacts with TNFAIP6 (via Link domain). Highest expression levels detected in kidney, liver, spleen and muscle. Isoform Alpha is expressed ubiquitously but at varying levels, while isoform Beta displays tissue-specific expression, with expression detected in kidney, liver, heart, spleen and muscle but not in lung, colon, brain, skin and stomach.

The protein localises to the secreted. Its function is as follows. Chemoattractant active on T-lymphocytes and monocytes but not neutrophils. Activates the C-X-C chemokine receptor CXCR4 to induce a rapid and transient rise in the level of intracellular calcium ions and chemotaxis. Also binds to atypical chemokine receptor ACKR3, which activates the beta-arrestin pathway and acts as a scavenger receptor for SDF-1. Binds to the allosteric site (site 2) of integrins and activates integrins ITGAV:ITGB3, ITGA4:ITGB1 and ITGA5:ITGB1 in a CXCR4-independent manner. Acts as a positive regulator of monocyte migration and a negative regulator of monocyte adhesion via the LYN kinase. Stimulates migration of monocytes and T-lymphocytes through its receptors, CXCR4 and ACKR3, and decreases monocyte adherence to surfaces coated with ICAM-1, a ligand for beta-2 integrins. SDF1A/CXCR4 signaling axis inhibits beta-2 integrin LFA-1 mediated adhesion of monocytes to ICAM-1 through LYN kinase. Plays a protective role after myocardial infarction. Induces down-regulation and internalization of ACKR3 expressed in various cells. Has several critical functions during embryonic development; required for B-cell lymphopoiesis, myelopoiesis in bone marrow and heart ventricular septum formation. Stimulates the proliferation of bone marrow-derived B-cell progenitors in the presence of IL7 as well as growth of stromal cell-dependent pre-B-cells. In Mus musculus (Mouse), this protein is Stromal cell-derived factor 1 (Cxcl12).